The chain runs to 569 residues: Rab GTPase-binding effector protein 2 (569 aa).

Disordered regions lie at residues 1-38 (MAAA…AELG), 181-267 (QRRP…ASLV), and 388-414 (RAEQ…PSSV). Alanine 2 is modified (N-acetylalanine). Residues 29–38 (EGANGEAELG) are compositionally biased toward low complexity. The stretch at 34 to 184 (EAELGELSRL…ELIQEIQRRP (151 aa)) forms a coiled coil. Phosphoserine is present on residues serine 189, serine 193, serine 200, and serine 204. Low complexity predominate over residues 245-257 (SSSSLPRSRQGLS). The stretch at 292–391 (WEQLQMEGRQ…EENQGLRAEQ (100 aa)) forms a coiled coil. A compositionally biased stretch (low complexity) spans 393–403 (PSSAPQGPQQE). Residues 423–523 (RTRQEARAQL…LQAELETSEQ (101 aa)) are a coiled coil.

This sequence belongs to the rabaptin family. In terms of assembly, heterodimer with RABGEF1. The dimer binds RAB5A that has been activated by GTP-binding. Interacts with SDCCAG8; this interaction is important for ciliogenesis regulation. Interacts with RAB4; this interaction may mediate VEGFR2 cell surface expression.

It is found in the cytoplasm. Its subcellular location is the early endosome. The protein resides in the cytoskeleton. It localises to the microtubule organizing center. The protein localises to the centrosome. It is found in the cilium basal body. In terms of biological role, plays a role in membrane trafficking and in homotypic early endosome fusion. Participates in arteriogenesis by regulating vascular endothelial growth factor receptor 2/VEGFR2 cell surface expression and endosomal trafficking. By interacting with SDCCAG8, localizes to centrosomes and plays a critical role in ciliogenesis. The protein is Rab GTPase-binding effector protein 2 (RABEP2) of Pongo abelii (Sumatran orangutan).